We begin with the raw amino-acid sequence, 180 residues long: MAEDDLCSLFFKLKVEDVTSSDELARHMKNASNERKPLIEPGENQSMDIDEEGGSVGHGLLYLYVDCPTMMLCFYGGSLPYNWMQGALLTNLPPYQHDVTLDEVNRGLRQASGFFGYADPMRSAYFAAFSFPERVIKLNEQMELTSTKGKCLTFDPYASTQLRFEPGELVRHGECKFAIG.

Hydrolyzes cytokinin glucosides thus liberating free cytokinins. The protein is Cytokinin-beta-glucosidase 3 (ROLC3) of Panax ginseng (Korean ginseng).